We begin with the raw amino-acid sequence, 860 residues long: Glucans biosynthesis glucosyltransferase H (860 aa).

Transmembrane regions (helical) follow at residues 146–166, 200–220, 519–539, 576–596, 610–630, and 686–706; these read ILLI…KGIL, ILLL…TALM, VFLT…FLVL, LFST…ILIW, TVSM…RMLF, and FLWW…VSVI.

Belongs to the glycosyltransferase 2 family. OpgH subfamily.

The protein resides in the cell inner membrane. The protein operates within glycan metabolism; osmoregulated periplasmic glucan (OPG) biosynthesis. Involved in the biosynthesis of osmoregulated periplasmic glucans (OPGs). The polypeptide is Glucans biosynthesis glucosyltransferase H (Pseudomonas savastanoi pv. phaseolicola (strain 1448A / Race 6) (Pseudomonas syringae pv. phaseolicola (strain 1448A / Race 6))).